A 371-amino-acid polypeptide reads, in one-letter code: Bifunctional enzyme IspD/IspF (371 aa).

The interval 1-214 (MNSCFIILAG…NSDIKFNNLI (214 aa)) is 2-C-methyl-D-erythritol 4-phosphate cytidylyltransferase. Residues 215–371 (KFGIGFDVHR…EVIASVIKND (157 aa)) form a 2-C-methyl-D-erythritol 2,4-cyclodiphosphate synthase region. Residues Asp-221 and His-223 each coordinate a divalent metal cation. 4-CDP-2-C-methyl-D-erythritol 2-phosphate contacts are provided by residues 221–223 (DVH) and 247–248 (HS). His-255 contacts a divalent metal cation. Residues 269–271 (DIG), 274–278 (FSDKN), and Lys-355 contribute to the 4-CDP-2-C-methyl-D-erythritol 2-phosphate site.

In the N-terminal section; belongs to the IspD/TarI cytidylyltransferase family. IspD subfamily. This sequence in the C-terminal section; belongs to the IspF family. A divalent metal cation serves as cofactor.

It carries out the reaction 2-C-methyl-D-erythritol 4-phosphate + CTP + H(+) = 4-CDP-2-C-methyl-D-erythritol + diphosphate. It catalyses the reaction 4-CDP-2-C-methyl-D-erythritol 2-phosphate = 2-C-methyl-D-erythritol 2,4-cyclic diphosphate + CMP. It participates in isoprenoid biosynthesis; isopentenyl diphosphate biosynthesis via DXP pathway; isopentenyl diphosphate from 1-deoxy-D-xylulose 5-phosphate: step 2/6. It functions in the pathway isoprenoid biosynthesis; isopentenyl diphosphate biosynthesis via DXP pathway; isopentenyl diphosphate from 1-deoxy-D-xylulose 5-phosphate: step 4/6. Bifunctional enzyme that catalyzes the formation of 4-diphosphocytidyl-2-C-methyl-D-erythritol from CTP and 2-C-methyl-D-erythritol 4-phosphate (MEP) (IspD), and catalyzes the conversion of 4-diphosphocytidyl-2-C-methyl-D-erythritol 2-phosphate (CDP-ME2P) to 2-C-methyl-D-erythritol 2,4-cyclodiphosphate (ME-CPP) with a corresponding release of cytidine 5-monophosphate (CMP) (IspF). The sequence is that of Bifunctional enzyme IspD/IspF from Pelagibacter ubique (strain HTCC1062).